Consider the following 347-residue polypeptide: Merozoite surface protein P12 (347 aa).

A signal peptide spans 1-25 (MIKLSKKYCLGISFVLYILLSVCEG). 6-Cys domains are found at residues 27 to 172 (KNLT…IPSL) and 175 to 305 (KVKG…ISSS). An N-linked (GlcNAc...) asparagine glycan is attached at Asn-28. Cystine bridges form between Cys-31/Cys-53, Cys-67/Cys-138, and Cys-81/Cys-136. N-linked (GlcNAc...) asparagine glycosylation is found at Asn-147, Asn-200, Asn-228, Asn-242, Asn-265, and Asn-322. 3 cysteine pairs are disulfide-bonded: Cys-179/Cys-211, Cys-225/Cys-286, and Cys-236/Cys-284. The GPI-anchor amidated asparagine moiety is linked to residue Asn-322. Positions 323–347 (SSFLTLSSYCAFITFIITSFLSFIL) are cleaved as a propeptide — removed in mature form.

As to quaternary structure, heterodimer; heterodimerizes with PF41. May form an antiparallel heterodimer with PF41. Post-translationally, processed into a soluble form.

It localises to the cell surface. The protein resides in the cell membrane. This chain is Merozoite surface protein P12 (PF12), found in Plasmodium falciparum (isolate 3D7).